We begin with the raw amino-acid sequence, 283 residues long: Coiled-coil domain-containing protein 42 homolog (283 aa).

Coiled coils occupy residues 31–139 (ATQL…LQRY) and 174–204 (QDLR…HRVS).

This sequence belongs to the CFAP73 family.

In Monosiga brevicollis (Choanoflagellate), this protein is Coiled-coil domain-containing protein 42 homolog.